A 275-amino-acid chain; its full sequence is uncharacterized protein (275 aa).

The span at 148–158 shows a compositional bias: polar residues; that stretch reads TFPTTAPSITP. Residues 148–173 are disordered; that stretch reads TFPTTAPSITPGNKEGEKTTSTDTDE. A helical transmembrane segment spans residues 187-207; that stretch reads ILIAVTLLLSGVAIIVFVIFE. The interval 234–264 is disordered; that stretch reads GQPPGTAESKPDSQPQKVGQDAANSSNPKKA. Residues 245–261 are compositionally biased toward polar residues; that stretch reads DSQPQKVGQDAANSSNP.

The protein resides in the membrane. This is an uncharacterized protein from Homo sapiens (Human).